The following is a 1166-amino-acid chain: Calcium-activated potassium channel subunit alpha-1 (1166 aa).

Over residues 1–15 the composition is skewed to gly residues; that stretch reads MANGGGGGGGGGGGS. Disordered regions lie at residues 1-20 and 30-51; these read MANG…LRMS and LDAS…SVHE. Residues 1–74 lie on the Extracellular side of the membrane; the sequence is MANGGGGGGG…VPCDSRGQRM (74 aa). Over residues 33–48 the composition is skewed to low complexity; that stretch reads SSSSSSSSSSSSSSSS. A helical membrane pass occupies residues 75–95; it reads WWAFLASSMVTFFGGLFIILL. Residues 96-166 lie on the Cytoplasmic side of the membrane; the sequence is WRTLKYLWTV…MISAQTLTGR (71 aa). 3 S-palmitoyl cysteine lipidation sites follow: Cys106, Cys107, and Cys109. Phosphothreonine; by CamK2 is present on Thr139. The chain crosses the membrane as a helical span at residues 167–187; that stretch reads VLVVLVFALSIGALVIYFIDS. The Extracellular portion of the chain corresponds to 188–202; that stretch reads SNPIESCQNFYKDFT. Residues 203–223 traverse the membrane as a helical segment; it reads LQIDMAFNVFFLLYFGLRFIA. At 224–227 the chain is on the cytoplasmic side; sequence ANDK. A helical transmembrane segment spans residues 228–248; that stretch reads LWFWLEVNSVVDFFTVPPVFV. The Extracellular segment spans residues 249-252; the sequence is SVYL. The chain crosses the membrane as a helical; Voltage-sensor span at residues 253–273; sequence NRSWLGLRFLRALRLIQFSEI. The Cytoplasmic portion of the chain corresponds to 274–288; sequence LQFLNILKTSNSIKL. A helical membrane pass occupies residues 289 to 309; that stretch reads VNLLSIFISTWLTAAGFIHLV. At 310–323 the chain is on the extracellular side; sequence ENSGDPWENFQNNQ. The pore-forming intramembrane region spans 324–346; the sequence is ALTYWECVYLLMVTMSTVGYGDV. The Selectivity for potassium signature appears at 340–343; it reads TVGY. Topologically, residues 347 to 355 are extracellular; that stretch reads YAKTTLGRL. Residues 356-376 traverse the membrane as a helical segment; sequence FMVFFILGGLAMFASYVPEII. Topologically, residues 377-1166 are cytoplasmic; it reads ELIGNRKKYG…KQKYVQEERL (790 aa). In terms of domain architecture, RCK N-terminal 1 spans 395–537; that stretch reads RKHIVVCGHI…WNWKEGDDAI (143 aa). 3 residues coordinate Mg(2+): Glu427, Gln450, and Glu452. Residues 544–564 are segment S7; that stretch reads LGFIAQSCLAQGLSTMLANLF. The interval 601-621 is segment S8; it reads LSFPTVCELCFVKLKLLMIAI. Residues 665-669 are heme-binding motif; that stretch reads CKACH. The segment at 689-717 is disordered; it reads EQPSTLSPKKKQRNGGMRNSPSSSPKLMR. Residue Thr693 is modified to Phosphothreonine. Phosphoserine occurs at positions 695, 708, and 712. The segment S9 stretch occupies residues 767–787; the sequence is VLSGHVVVCIFGDVSSALIGL. Positions 769-913 constitute an RCK N-terminal 2 domain; sequence SGHVVVCIFG…MDRSSPDNSP (145 aa). Thr900 is modified (phosphothreonine). Phosphoserine is present on residues Ser908 and Ser912. Positions 933-955 match the Calcium bowl motif; that stretch reads TELVNDTNVQFLDQDDDDDPDTE. Gln942, Asp945, Asp948, and Asp950 together coordinate Ca(2+). The segment at 962-982 is segment S10; the sequence is FACGTAFAVSVLDSLMSATYF. Low complexity predominate over residues 1116–1141; sequence RASLSHSSHSSQSSSKKSSSVHSIPS. The disordered stretch occupies residues 1116–1166; sequence RASLSHSSHSSQSSSKKSSSVHSIPSTANRQNRPKSRESRDKQKYVQEERL. Positions 1150 to 1166 are enriched in basic and acidic residues; that stretch reads KSRESRDKQKYVQEERL. 2 positions are modified to phosphoserine; by PKG: Ser1151 and Ser1154.

This sequence belongs to the potassium channel family. Calcium-activated (TC 1.A.1.3) subfamily. KCa1.1/KCNMA1 sub-subfamily. In terms of assembly, homotetramer; which constitutes the calcium-activated potassium channel. Interacts with beta subunits KCNMB1, KCNMB2, KCNMB3 and KCNMB4. Interacts with gamma subunits LRRC26, LRRC38, LRRC52 and LRRC55. Beta and gamma subunits are accessory, and modulate its activity. Interacts with RAB11B. Post-translationally, phosphorylated. Stimulated by PKG, but not by PKA. In smooth muscles, phosphorylation affects its activity. Phosphorylated. Exclusively stimulated by PKA. In smooth muscles, phosphorylation affects its activity. In terms of processing, incremental phosphorylation of Thr-139 of the KCNMA1 tetramer changes the response to ethanol from increased activation to inhibition of channel activity. Post-translationally, palmitoylation by ZDHHC22 and ZDHHC23 within the intracellular linker between the S0 and S1 transmembrane domains regulates localization to the plasma membrane. Depalmitoylated by LYPLA1 and LYPLAL1, leading to retard exit from the trans-Golgi network.

The protein localises to the cell membrane. It catalyses the reaction K(+)(in) = K(+)(out). Its activity is regulated as follows. Ethanol and carbon monoxide-bound heme increase channel activation. Heme inhibits channel activation. Phosphorylation of Thr-139 leads to inhibition of channel activity by ethanol. Its function is as follows. Potassium channel activated by both membrane depolarization or increase in cytosolic Ca(2+) that mediates export of K(+). It is also activated by concentration of cytosolic Mg(2+). Its activation dampens the excitatory events that elevate the cytosolic Ca(2+) concentration and/or depolarize the cell membrane. It therefore contributes to repolarization of the membrane potential. Plays a key role in controlling excitability in a number of systems, such as regulation of the contraction of smooth muscle, the tuning of hair cells in the cochlea, regulation of transmitter release, and innate immunity. In smooth muscles, its activation by high level of Ca(2+), caused by ryanodine receptors in the sarcoplasmic reticulum, regulates the membrane potential. In cochlea cells, its number and kinetic properties partly determine the characteristic frequency of each hair cell and thereby helps to establish a tonotopic map. Kinetics of KCNMA1 channels are determined by alternative splicing, phosphorylation status and its combination with modulating beta subunits. Highly sensitive to both iberiotoxin (IbTx) and charybdotoxin (CTX). The polypeptide is Calcium-activated potassium channel subunit alpha-1 (KCNMA1) (Bos taurus (Bovine)).